Reading from the N-terminus, the 515-residue chain is Cytochrome P450 monooxygenase paxP (515 aa).

Residues 20-36 form a helical membrane-spanning segment; the sequence is SLLWKLGVFAVLVYFLL. Cys-456 is a binding site for heme.

This sequence belongs to the cytochrome P450 family. Requires heme as cofactor.

It localises to the membrane. It participates in secondary metabolite biosynthesis. Its function is as follows. Cytochrome P450 monooxygenase; part of the ATM2 gene cluster that mediates the biosynthesis of paxilline, a mycotoxin that acts as an inhibitor of mammalian maxi-K channels. PaxG, the geranylgeranyl diphosphate (GGPP) synthase is proposed to catalyze the first step in paxilline biosynthesis. Condensation of indole-3-glycerol phosphate with GGPP by paxC then forms 3-geranylgeranylindole (3-GGI), followed by epoxidation and cyclization of this intermediate (by paxM and paxB) to form paspaline. Paspaline is subsequently converted to 13-desoxypaxilline by paxP, the latter being then converted to paxilline by paxQ. Finally paxilline can be mono- and di-prenylated by paxD. PaxP can also utilized beta-paxitriol and alpha-PC-M6 as substrates converting them to paxilline. The protein is Cytochrome P450 monooxygenase paxP of Penicillium paxilli.